The primary structure comprises 560 residues: Clathrin interactor EPSIN 1 (560 aa).

The ENTH domain maps to 20 to 152 (LKVLKVPEME…NNKEKISEIR (133 aa)). The interval 190 to 288 (NFDSYKDRDS…KPSTGSANQV (99 aa)) is disordered. Positions 193–220 (SYKDRDSREDKNDYESFQKSRRGVKTEE) are enriched in basic and acidic residues. Positions 221-233 (QSYTSKKSFSRYG) are enriched in polar residues. The segment covering 234 to 251 (STDHDNLSSGKKSPDSAK) has biased composition (basic and acidic residues). Residues 274–287 (GTSSNKPSTGSANQ) show a composition bias toward polar residues. Positions 296-300 (IGDFL) match the Clathrin binding motif. Residues 320–322 (DLF) carry the ALPHA-ADR binding motif. The span at 414-439 (SHSASVSTGPQAPSVHGSATNTTSPL) shows a compositional bias: polar residues. 2 disordered regions span residues 414-453 (SHSA…QKKD) and 517-560 (LGKT…GFKQ). The span at 526-536 (QQQQQQQQQQQ) shows a compositional bias: low complexity. The segment covering 544–554 (FFSSLSNQRYQ) has biased composition (polar residues).

This sequence belongs to the epsin family. In terms of assembly, interacts with clathrin, VTI11, GAMMA-ADR and VSR1. Binds to the deubiquitinating enzyme AMSH3. As to expression, mostly expressed in cotyledons and flowers, and, to a lower extent, in roots, leaves and siliques (at protein level).

The protein resides in the golgi apparatus. It is found in the prevacuolar compartment. The protein localises to the cytoplasm. It localises to the cytoplasmic vesicle. Its subcellular location is the clathrin-coated vesicle. The protein resides in the cytoskeleton. Its function is as follows. May have a role in transport via clathrin-coated vesicles from the trans-Golgi network to endosomes. Stimulates clathrin assembly. Does not seem to bind to phospholipids. Plays an important role in the vacuolar trafficking of soluble cargo proteins at the trans-Golgi network. This Arabidopsis thaliana (Mouse-ear cress) protein is Clathrin interactor EPSIN 1 (EPSIN1).